The primary structure comprises 696 residues: MMGPEDAGACSGRNAELLPVPGPMGQDGKTVPATSGFSGGAVAAEPPEEAGEEEAPPPRQLLQRYLAAAAGPLKPGLGGAEAEEAAAAAVPAARGSGMTNGDSGFLLRQDRRGPEEARRRRTCGRPCLLEPADEGVDGAGGLDDWAAPLEDPLRSCCLAAGDTDDPDPAAATPAGRAVESAEPSLGLPDARFGSRNTFEVSRRQSAGDLLPSAGPSAPLPAAEQGPGGTTARARRSGGFADFFARNLFPKRTKELKSVVHSAPGWKLFGKVPPRENLQKTSKIIQQEYEARTGRTCKAAPQSSRRKSFALEPLSTTALILEDRPPNLPAKSVEEALRHRQEYDEMVAEAKKREIKEAHKRKRIMKERFKQEESIASAMVIWINEILPNWEVMRSTRRVRELWWQGLPPSVRGKVWSLAVGNELNITPELYEIFLSRAKERWKSFSESSSENDTEGLSVADREASLELIKLDISRTFPSLYIFQKGGPYHDVLHSILGAYTCYRPDVGYVQGMSFIAAVLILNLEEADAFIAFANLLNKPCQLAFFRVDHSMMLKYFATFEVFFEENLSKLFLHFKSYNLTPDIYLIDWIFTLYSKSLPLDLACRVWDVFCRDGEEFLFRTGLGILRLYEDILLQMDFIHIAQFLTKLPEDITSEKLFSCIAAIQMQNSTKKWTQVFASVAKDIKEGDKNTSPALKS.

The residue at position 1 (Met-1) is an N-acetylmethionine. Disordered regions lie at residues Met-1 to Arg-59, Pro-91 to Arg-121, and Cys-156 to Arg-234. Acidic residues predominate over residues Pro-46 to Ala-55. The segment covering Arg-108–Arg-118 has biased composition (basic and acidic residues). Ser-205 bears the Phosphoserine mark. The span at Leu-209–Ala-222 shows a compositional bias: low complexity. Ser-236 bears the Phosphoserine mark. Residues Lys-330–Ser-373 are a coiled coil. The 209-residue stretch at Gly-405–Gly-613 folds into the Rab-GAP TBC domain. Position 668 is a phosphoserine (Ser-668). Thr-669 is modified (phosphothreonine).

In terms of assembly, interacts with RAB11A; this interaction recruits TBC1D12 to RAB11A-positive recycling endosomes.

It localises to the endosome. Functionally, RAB11A-binding protein that plays a role in neurite outgrowth. The polypeptide is TBC1 domain family member 12 (Tbc1d12) (Mus musculus (Mouse)).